The sequence spans 593 residues: Methionine--tRNA ligase, mitochondrial (593 aa).

Residues 1-29 (MLRVSAFRLLGRRGASRVSLLEDFSFRYY) constitute a mitochondrion transit peptide. Positions 52–62 (FYVNAAPHIGH) match the 'HIGH' region motif. The short motif at 347–351 (KMSKS) is the 'KMSKS' region element. Lysine 350 serves as a coordination point for ATP.

It belongs to the class-I aminoacyl-tRNA synthetase family.

It is found in the mitochondrion matrix. The catalysed reaction is tRNA(Met) + L-methionine + ATP = L-methionyl-tRNA(Met) + AMP + diphosphate. The sequence is that of Methionine--tRNA ligase, mitochondrial (MARS2) from Bos taurus (Bovine).